Reading from the N-terminus, the 257-residue chain is Serine/arginine-rich splicing factor 1 (257 aa).

Ser-2 is modified (N-acetylserine). The 76-residue stretch at 16–91 folds into the RRM 1 domain; that stretch reads CRIYVGNLPP…YRLRVEFPRS (76 aa). Positions 88–116 are disordered; the sequence is FPRSGRGTGRGGGGGGGGGAPRGRYGPPS. Gly residues predominate over residues 93–108; that stretch reads RGTGRGGGGGGGGGAP. The RRM 2 domain maps to 121-195; that stretch reads YRVIVSGLPP…ETAYIRVKVD (75 aa).

The protein resides in the cytoplasm. The protein localises to the nucleus speckle. May play a role in preventing exon skipping, ensuring the accuracy of splicing and regulating alternative splicing. This Gallus gallus (Chicken) protein is Serine/arginine-rich splicing factor 1 (SRSF1).